Reading from the N-terminus, the 246-residue chain is UDP-2,3-diacylglucosamine hydrolase (246 aa).

Mn(2+)-binding residues include Asp8, His10, Asp41, Asn79, and His114. 79 to 80 (NR) lines the substrate pocket. Residues Asp122, Ser160, Lys164, Lys167, and His195 each coordinate substrate. Mn(2+) is bound by residues His195 and His197.

Belongs to the LpxH family. It depends on Mn(2+) as a cofactor.

The protein resides in the cell inner membrane. It carries out the reaction UDP-2-N,3-O-bis[(3R)-3-hydroxytetradecanoyl]-alpha-D-glucosamine + H2O = 2-N,3-O-bis[(3R)-3-hydroxytetradecanoyl]-alpha-D-glucosaminyl 1-phosphate + UMP + 2 H(+). The protein operates within glycolipid biosynthesis; lipid IV(A) biosynthesis; lipid IV(A) from (3R)-3-hydroxytetradecanoyl-[acyl-carrier-protein] and UDP-N-acetyl-alpha-D-glucosamine: step 4/6. Its function is as follows. Hydrolyzes the pyrophosphate bond of UDP-2,3-diacylglucosamine to yield 2,3-diacylglucosamine 1-phosphate (lipid X) and UMP by catalyzing the attack of water at the alpha-P atom. Involved in the biosynthesis of lipid A, a phosphorylated glycolipid that anchors the lipopolysaccharide to the outer membrane of the cell. The protein is UDP-2,3-diacylglucosamine hydrolase of Tolumonas auensis (strain DSM 9187 / NBRC 110442 / TA 4).